A 208-amino-acid chain; its full sequence is Methylthioribulose-1-phosphate dehydratase (208 aa).

Zn(2+) is bound by residues histidine 99 and histidine 101.

Belongs to the aldolase class II family. MtnB subfamily. It depends on Zn(2+) as a cofactor.

The enzyme catalyses 5-(methylsulfanyl)-D-ribulose 1-phosphate = 5-methylsulfanyl-2,3-dioxopentyl phosphate + H2O. Its pathway is amino-acid biosynthesis; L-methionine biosynthesis via salvage pathway; L-methionine from S-methyl-5-thio-alpha-D-ribose 1-phosphate: step 2/6. In terms of biological role, catalyzes the dehydration of methylthioribulose-1-phosphate (MTRu-1-P) into 2,3-diketo-5-methylthiopentyl-1-phosphate (DK-MTP-1-P). The protein is Methylthioribulose-1-phosphate dehydratase of Aquifex aeolicus (strain VF5).